The sequence spans 699 residues: Elongation factor G (699 aa).

The tr-type G domain maps to 8–286 (EKLRNIGIVA…AVIVTYPLPI (279 aa)). Residues 17 to 24 (AHIDAGKT), 84 to 88 (DTPGH), and 138 to 141 (NKMD) contribute to the GTP site.

It belongs to the TRAFAC class translation factor GTPase superfamily. Classic translation factor GTPase family. EF-G/EF-2 subfamily.

It is found in the cytoplasm. Its function is as follows. Catalyzes the GTP-dependent ribosomal translocation step during translation elongation. During this step, the ribosome changes from the pre-translocational (PRE) to the post-translocational (POST) state as the newly formed A-site-bound peptidyl-tRNA and P-site-bound deacylated tRNA move to the P and E sites, respectively. Catalyzes the coordinated movement of the two tRNA molecules, the mRNA and conformational changes in the ribosome. The polypeptide is Elongation factor G (fusA) (Aquifex pyrophilus).